Here is a 318-residue protein sequence, read N- to C-terminus: HPr kinase/phosphorylase (318 aa).

Catalysis depends on residues His146 and Lys167. 161 to 168 (GESGLGKS) contributes to the ATP binding site. Position 168 (Ser168) interacts with Mg(2+). The active-site Proton acceptor; for phosphorylation activity. Proton donor; for dephosphorylation activity is the Asp185. Residues 209–218 (LEVRGIGLLD) form an important for the catalytic mechanism of both phosphorylation and dephosphorylation region. Glu210 contacts Mg(2+). Arg252 is a catalytic residue. Positions 273–278 (QVVAGR) are important for the catalytic mechanism of dephosphorylation.

The protein belongs to the HPrK/P family. As to quaternary structure, homohexamer. The cofactor is Mg(2+).

It carries out the reaction [HPr protein]-L-serine + ATP = [HPr protein]-O-phospho-L-serine + ADP + H(+). It catalyses the reaction [HPr protein]-O-phospho-L-serine + phosphate + H(+) = [HPr protein]-L-serine + diphosphate. In terms of biological role, catalyzes the ATP- as well as the pyrophosphate-dependent phosphorylation of a specific serine residue in HPr, a phosphocarrier protein of the phosphoenolpyruvate-dependent sugar phosphotransferase system (PTS). HprK/P also catalyzes the pyrophosphate-producing, inorganic phosphate-dependent dephosphorylation (phosphorolysis) of seryl-phosphorylated HPr (P-Ser-HPr). This chain is HPr kinase/phosphorylase, found in Acidovorax sp. (strain JS42).